The primary structure comprises 276 residues: 2-dehydro-3-deoxyphosphooctonate aldolase (276 aa).

This sequence belongs to the KdsA family.

It localises to the cytoplasm. The enzyme catalyses D-arabinose 5-phosphate + phosphoenolpyruvate + H2O = 3-deoxy-alpha-D-manno-2-octulosonate-8-phosphate + phosphate. It functions in the pathway carbohydrate biosynthesis; 3-deoxy-D-manno-octulosonate biosynthesis; 3-deoxy-D-manno-octulosonate from D-ribulose 5-phosphate: step 2/3. The protein operates within bacterial outer membrane biogenesis; lipopolysaccharide biosynthesis. The protein is 2-dehydro-3-deoxyphosphooctonate aldolase of Xylella fastidiosa (strain 9a5c).